Reading from the N-terminus, the 1377-residue chain is DNA-directed RNA polymerase subunit beta' (1377 aa).

C60, C62, C75, and C78 together coordinate Zn(2+). 3 residues coordinate Mg(2+): D449, D451, and D453. Residues C777, C851, C858, and C861 each coordinate Zn(2+).

This sequence belongs to the RNA polymerase beta' chain family. As to quaternary structure, the RNAP catalytic core consists of 2 alpha, 1 beta, 1 beta' and 1 omega subunit. When a sigma factor is associated with the core the holoenzyme is formed, which can initiate transcription. It depends on Mg(2+) as a cofactor. Requires Zn(2+) as cofactor.

The enzyme catalyses RNA(n) + a ribonucleoside 5'-triphosphate = RNA(n+1) + diphosphate. In terms of biological role, DNA-dependent RNA polymerase catalyzes the transcription of DNA into RNA using the four ribonucleoside triphosphates as substrates. This Borreliella burgdorferi (strain ZS7) (Borrelia burgdorferi) protein is DNA-directed RNA polymerase subunit beta'.